The following is a 67-amino-acid chain: Conotoxin ArMLKM-01 (67 aa).

The N-terminal stretch at 1–24 (MLKMEVVLFTFLVLFPLSTLQLET) is a signal peptide. Residues 25 to 51 (DQPVERYVENKQDLNPDESRNFMLPIV) constitute a propeptide that is removed on maturation. Cystine bridges form between cysteine 54–cysteine 65, cysteine 55–cysteine 63, and cysteine 58–cysteine 66.

This sequence belongs to the conotoxin M superfamily. As to expression, expressed by the venom duct.

It is found in the secreted. The polypeptide is Conotoxin ArMLKM-01 (Conus arenatus (Sand-dusted cone)).